The chain runs to 383 residues: ATP phosphoribosyltransferase regulatory subunit (383 aa).

Belongs to the class-II aminoacyl-tRNA synthetase family. HisZ subfamily. Heteromultimer composed of HisG and HisZ subunits.

The protein resides in the cytoplasm. Its pathway is amino-acid biosynthesis; L-histidine biosynthesis; L-histidine from 5-phospho-alpha-D-ribose 1-diphosphate: step 1/9. Required for the first step of histidine biosynthesis. May allow the feedback regulation of ATP phosphoribosyltransferase activity by histidine. The chain is ATP phosphoribosyltransferase regulatory subunit from Neisseria gonorrhoeae (strain NCCP11945).